A 393-amino-acid chain; its full sequence is Phosphoglycerate kinase (393 aa).

Substrate-binding positions include 21 to 23, R36, 59 to 62, R113, and R146; these read DLN and HLGR. ATP is bound by residues K197, E319, and 345–348; that span reads GGDT.

Belongs to the phosphoglycerate kinase family. As to quaternary structure, monomer.

Its subcellular location is the cytoplasm. The catalysed reaction is (2R)-3-phosphoglycerate + ATP = (2R)-3-phospho-glyceroyl phosphate + ADP. The protein operates within carbohydrate degradation; glycolysis; pyruvate from D-glyceraldehyde 3-phosphate: step 2/5. This chain is Phosphoglycerate kinase, found in Nitratidesulfovibrio vulgaris (strain DSM 19637 / Miyazaki F) (Desulfovibrio vulgaris).